We begin with the raw amino-acid sequence, 476 residues long: ATP synthase subunit beta (476 aa).

154–161 (GGAGVGKT) serves as a coordination point for ATP.

The protein belongs to the ATPase alpha/beta chains family. F-type ATPases have 2 components, CF(1) - the catalytic core - and CF(0) - the membrane proton channel. CF(1) has five subunits: alpha(3), beta(3), gamma(1), delta(1), epsilon(1). CF(0) has three main subunits: a(1), b(2) and c(9-12). The alpha and beta chains form an alternating ring which encloses part of the gamma chain. CF(1) is attached to CF(0) by a central stalk formed by the gamma and epsilon chains, while a peripheral stalk is formed by the delta and b chains.

It is found in the cell inner membrane. The catalysed reaction is ATP + H2O + 4 H(+)(in) = ADP + phosphate + 5 H(+)(out). Functionally, produces ATP from ADP in the presence of a proton gradient across the membrane. The catalytic sites are hosted primarily by the beta subunits. The chain is ATP synthase subunit beta from Afipia carboxidovorans (strain ATCC 49405 / DSM 1227 / KCTC 32145 / OM5) (Oligotropha carboxidovorans).